The primary structure comprises 130 residues: Profilin-12 (130 aa).

Cys-13 and Cys-115 are joined by a disulfide. An Involved in PIP2 interaction motif is present at residues 81–97; the sequence is AVIRGKKGSGGITVKKT. A Phosphothreonine modification is found at Thr-111.

Belongs to the profilin family. Occurs in many kinds of cells as a complex with monomeric actin in a 1:1 ratio. In terms of processing, phosphorylated by MAP kinases.

The protein localises to the cytoplasm. Its subcellular location is the cytoskeleton. Its function is as follows. Binds to actin and affects the structure of the cytoskeleton. At high concentrations, profilin prevents the polymerization of actin, whereas it enhances it at low concentrations. This is Profilin-12 from Zea mays (Maize).